We begin with the raw amino-acid sequence, 443 residues long: Xaa-Pro dipeptidase (443 aa).

Asp-246, Asp-257, His-339, Glu-384, and Glu-423 together coordinate Mn(2+).

Belongs to the peptidase M24B family. Bacterial-type prolidase subfamily. Requires Mn(2+) as cofactor.

The catalysed reaction is Xaa-L-Pro dipeptide + H2O = an L-alpha-amino acid + L-proline. Its function is as follows. Splits dipeptides with a prolyl residue in the C-terminal position. The chain is Xaa-Pro dipeptidase from Yersinia pseudotuberculosis serotype I (strain IP32953).